The chain runs to 119 residues: Large ribosomal subunit protein bL19 (119 aa).

The protein belongs to the bacterial ribosomal protein bL19 family.

Functionally, this protein is located at the 30S-50S ribosomal subunit interface and may play a role in the structure and function of the aminoacyl-tRNA binding site. The protein is Large ribosomal subunit protein bL19 of Pediococcus pentosaceus (strain ATCC 25745 / CCUG 21536 / LMG 10740 / 183-1w).